The primary structure comprises 226 residues: MRKNWTDEEIRVLQNNYEYVDTEIIANFLNRSYHSIKNKAVRLGISKNSVWTEDEDIYLEYFVYENDDNISKAAEFLGRTKDAVINRLAKLRKRDSSVSFIRRPWTKKEDEILKNNYIIMSNDQLAERLRRTKASVAARKVLLGLTNKHMSKKDDKMIRHLGNQGYTIKEISAEMNLPYCLIKNYIRNHRINYRRESKNEMNGWRKEADATYSHYINSKKIKEEQA.

It to L.innocua lin1255, lin1742 and lin2408.

This is an uncharacterized protein from Listeria innocua serovar 6a (strain ATCC BAA-680 / CLIP 11262).